The primary structure comprises 199 residues: Recombination protein RecR (199 aa).

Residues 56–71 form a C4-type zinc finger; the sequence is CRSCFNVAQSELCRIC. In terms of domain architecture, Toprim spans 79–174; that stretch reads ALICVVEEPK…RVTRLASGLP (96 aa).

It belongs to the RecR family.

May play a role in DNA repair. It seems to be involved in an RecBC-independent recombinational process of DNA repair. It may act with RecF and RecO. The sequence is that of Recombination protein RecR from Frankia alni (strain DSM 45986 / CECT 9034 / ACN14a).